Consider the following 326-residue polypeptide: Flap endonuclease 1 (326 aa).

The segment at 1 to 100 (MGNADLRSLA…DEVEKRREQR (100 aa)) is N-domain. Positions 28, 82, 154, 156, 175, 177, and 225 each coordinate Mg(2+). Residues 118–246 (RVAKLDSRTQ…TAVKDLHEHG (129 aa)) form an I-domain region. The interaction with PCNA stretch occupies residues 318–326 (VQTGLDRWA).

The protein belongs to the XPG/RAD2 endonuclease family. FEN1 subfamily. As to quaternary structure, interacts with PCNA. PCNA stimulates the nuclease activity without altering cleavage specificity. It depends on Mg(2+) as a cofactor.

Its function is as follows. Structure-specific nuclease with 5'-flap endonuclease and 5'-3' exonuclease activities involved in DNA replication and repair. During DNA replication, cleaves the 5'-overhanging flap structure that is generated by displacement synthesis when DNA polymerase encounters the 5'-end of a downstream Okazaki fragment. Binds the unpaired 3'-DNA end and kinks the DNA to facilitate 5' cleavage specificity. Cleaves one nucleotide into the double-stranded DNA from the junction in flap DNA, leaving a nick for ligation. Also involved in the base excision repair (BER) pathway. Acts as a genome stabilization factor that prevents flaps from equilibrating into structures that lead to duplications and deletions. Also possesses 5'-3' exonuclease activity on nicked or gapped double-stranded DNA. This Haloarcula marismortui (strain ATCC 43049 / DSM 3752 / JCM 8966 / VKM B-1809) (Halobacterium marismortui) protein is Flap endonuclease 1.